A 358-amino-acid chain; its full sequence is Heme A synthase (358 aa).

8 consecutive transmembrane segments (helical) span residues 25–45 (LVRY…MVGG), 111–131 (LLAR…WLTG), 141–161 (MLGL…MVAS), 176–196 (IHLT…RGLV), 210–230 (FAGW…LVAG), 269–289 (VQFV…LHAV), 304–324 (TIVL…TLLM), and 326–346 (APLH…AFAV). H273 contacts heme. H334 contacts heme.

It belongs to the COX15/CtaA family. Type 2 subfamily. Interacts with CtaB. Heme b is required as a cofactor.

The protein localises to the cell membrane. The catalysed reaction is Fe(II)-heme o + 2 A + H2O = Fe(II)-heme a + 2 AH2. It functions in the pathway porphyrin-containing compound metabolism; heme A biosynthesis; heme A from heme O: step 1/1. Functionally, catalyzes the conversion of heme O to heme A by two successive hydroxylations of the methyl group at C8. The first hydroxylation forms heme I, the second hydroxylation results in an unstable dihydroxymethyl group, which spontaneously dehydrates, resulting in the formyl group of heme A. This chain is Heme A synthase, found in Brucella abortus (strain S19).